A 308-amino-acid polypeptide reads, in one-letter code: MSAAPLVRDVDRLDPAGVAAVLALLRAATAADGVRPLSEEAELRLQHGGPAGGRDVLATAADGALTGYARFEGGEGTGDAEAELVVAPGSRRRGVGRALLTRLEELAGDRPLRVWAHGDLPGSAELAQRHGYERARVLLQMRRELAGVDPEPRLRLPEGVQVRTFRSGTDEQAWLRTNARAFASHPEQGSWTAEDLRLREAEPWFDPAGFFLAWDGDRLLGSHWTKVHPPGDEGPEAVGEVYVLGIDPDAQGLGLGRALTDVGLAHLRRLGLRQVLLYVEEDNTAAVTLYERSGFTRHAVDVSWRRAR.

N-acetyltransferase domains lie at 8 to 155 (RDVD…PRLR) and 160 to 308 (VQVR…RRAR). Residue E39 participates in 1D-myo-inositol 2-(L-cysteinylamino)-2-deoxy-alpha-D-glucopyranoside binding. Residue 84–86 (LVV) coordinates acetyl-CoA. The 1D-myo-inositol 2-(L-cysteinylamino)-2-deoxy-alpha-D-glucopyranoside site is built by E187, K226, and E240. Residues 244 to 246 (LGI) and 251 to 257 (QGLGLGR) contribute to the acetyl-CoA site. Residue Y278 coordinates 1D-myo-inositol 2-(L-cysteinylamino)-2-deoxy-alpha-D-glucopyranoside.

It belongs to the acetyltransferase family. MshD subfamily. Monomer.

The enzyme catalyses 1D-myo-inositol 2-(L-cysteinylamino)-2-deoxy-alpha-D-glucopyranoside + acetyl-CoA = mycothiol + CoA + H(+). Functionally, catalyzes the transfer of acetyl from acetyl-CoA to desacetylmycothiol (Cys-GlcN-Ins) to form mycothiol. The chain is Mycothiol acetyltransferase from Geodermatophilus obscurus (strain ATCC 25078 / DSM 43160 / JCM 3152 / CCUG 61914 / KCC A-0152 / KCTC 9177 / NBRC 13315 / NRRL B-3577 / G-20).